A 306-amino-acid polypeptide reads, in one-letter code: tRNA dimethylallyltransferase 2 (306 aa).

Glycine 19 to threonine 26 serves as a coordination point for ATP. Substrate is bound at residue threonine 21–threonine 26. The interval aspartate 44 to glutamine 47 is interaction with substrate tRNA.

Belongs to the IPP transferase family. As to quaternary structure, monomer. Mg(2+) is required as a cofactor.

It carries out the reaction adenosine(37) in tRNA + dimethylallyl diphosphate = N(6)-dimethylallyladenosine(37) in tRNA + diphosphate. Its function is as follows. Catalyzes the transfer of a dimethylallyl group onto the adenine at position 37 in tRNAs that read codons beginning with uridine, leading to the formation of N6-(dimethylallyl)adenosine (i(6)A). This chain is tRNA dimethylallyltransferase 2, found in Citrifermentans bemidjiense (strain ATCC BAA-1014 / DSM 16622 / JCM 12645 / Bem) (Geobacter bemidjiensis).